An 808-amino-acid chain; its full sequence is Type VI secretion system spike protein VgrG4b (808 aa).

Belongs to the VgrG protein family.

It is found in the secreted. Part of the H2 type VI secretion system (H2-T6SS) specialized secretion system, which delivers several virulence factors in both prokaryotic and eukaryotic cells during infection. Allows the delivery of the phospholipase effector PldA to target cells where it exerts its toxicity. This Pseudomonas aeruginosa (strain ATCC 15692 / DSM 22644 / CIP 104116 / JCM 14847 / LMG 12228 / 1C / PRS 101 / PAO1) protein is Type VI secretion system spike protein VgrG4b.